The following is a 327-amino-acid chain: Protein CONSERVED IN THE GREEN LINEAGE AND DIATOMS 27, chloroplastic (327 aa).

Residues 1–59 constitute a chloroplast transit peptide; the sequence is MLRLIVNYPLIPKISHRVCSNSSSKLGSYYDSSSIIKYGGISDVVGKKQELFLSVSVKA. A disordered region spans residues 66-88; it reads NGGGSMSFSGQSWDPSSEIEVPS. The next 3 membrane-spanning stretches (helical) occupy residues 119–139, 148–168, and 225–245; these read LGGLWLVTFTVLGVPVAAASF, FILAAGTGTLFLVSLIVLRIY, and LIGTGALLVSAFVLFVFATPV.

In terms of tissue distribution, mostly expressed in seeds, leaves and flowers, and, to a lower extent, in roots.

The protein resides in the membrane. The protein localises to the plastid. It localises to the chloroplast. Its function is as follows. Required for growth in low iron conditions. The polypeptide is Protein CONSERVED IN THE GREEN LINEAGE AND DIATOMS 27, chloroplastic (Arabidopsis thaliana (Mouse-ear cress)).